We begin with the raw amino-acid sequence, 166 residues long: Protein-export protein SecB (166 aa).

Belongs to the SecB family. Homotetramer, a dimer of dimers. One homotetramer interacts with 1 SecA dimer.

It is found in the cytoplasm. In terms of biological role, one of the proteins required for the normal export of preproteins out of the cell cytoplasm. It is a molecular chaperone that binds to a subset of precursor proteins, maintaining them in a translocation-competent state. It also specifically binds to its receptor SecA. The sequence is that of Protein-export protein SecB from Actinobacillus pleuropneumoniae serotype 7 (strain AP76).